Consider the following 580-residue polypeptide: 2-succinyl-5-enolpyruvyl-6-hydroxy-3-cyclohexene-1-carboxylate synthase (580 aa).

It belongs to the TPP enzyme family. MenD subfamily. In terms of assembly, homodimer. It depends on Mg(2+) as a cofactor. Mn(2+) serves as cofactor. Thiamine diphosphate is required as a cofactor.

The catalysed reaction is isochorismate + 2-oxoglutarate + H(+) = 5-enolpyruvoyl-6-hydroxy-2-succinyl-cyclohex-3-ene-1-carboxylate + CO2. Its pathway is quinol/quinone metabolism; 1,4-dihydroxy-2-naphthoate biosynthesis; 1,4-dihydroxy-2-naphthoate from chorismate: step 2/7. It functions in the pathway quinol/quinone metabolism; menaquinone biosynthesis. Functionally, catalyzes the thiamine diphosphate-dependent decarboxylation of 2-oxoglutarate and the subsequent addition of the resulting succinic semialdehyde-thiamine pyrophosphate anion to isochorismate to yield 2-succinyl-5-enolpyruvyl-6-hydroxy-3-cyclohexene-1-carboxylate (SEPHCHC). The sequence is that of 2-succinyl-5-enolpyruvyl-6-hydroxy-3-cyclohexene-1-carboxylate synthase from Bacillus pumilus (strain SAFR-032).